The following is a 167-amino-acid chain: Protein FAM163B (167 aa).

Residues 6–26 (VVITGGILATVILLCIIAVLC) form a helical membrane-spanning segment. The residue at position 40 (Ser-40) is a Phosphoserine.

The protein belongs to the FAM163 family.

Its subcellular location is the membrane. This Mus musculus (Mouse) protein is Protein FAM163B (Fam163b).